Consider the following 447-residue polypeptide: MSKVVHFDASKLTPFVHENELKEMQAMVTAADQELREGTGAGSDFRGWIDLPINYDKDEFDRIKKAAKKIQNDSEVLVGIGIGGSYLGAQASIEFLNSSFYGREKEKYPTVVFCGNSLSGSYLYDLLEWLGDKDFSINIISKSGTTTEPSIAFRVLKDKLIKKYGKEEAAKRIYATTDRAKGALKTEADAEGYEEFVVPDDIGGRFSVLSAVGLLPIAVAGGDIDAMMKGAADARAAYTDPDVLKDSPYQYAAMRNILYRKGYTTELLENYEPSLRMFGEWWKQLMGESEGKDQKGIYPSSANFTTDLHSLGQYIQEGRRNLMETVIRVEHPTHDVTIPDDKENLDQLNFLSGKTMNYVNDRAYEGVVLAHTDGGVPVMTVDIENQTAHTLGYLIYWFELAVGISGYLNGINPFNQPGVESYKRNMFGLLNKPGYEDLHDDLTKRLK.

The Proton donor role is filled by E288. Catalysis depends on residues H309 and K423.

This sequence belongs to the GPI family.

It is found in the cytoplasm. It carries out the reaction alpha-D-glucose 6-phosphate = beta-D-fructose 6-phosphate. Its pathway is carbohydrate biosynthesis; gluconeogenesis. It participates in carbohydrate degradation; glycolysis; D-glyceraldehyde 3-phosphate and glycerone phosphate from D-glucose: step 2/4. Functionally, catalyzes the reversible isomerization of glucose-6-phosphate to fructose-6-phosphate. The chain is Glucose-6-phosphate isomerase from Lactobacillus johnsonii (strain CNCM I-12250 / La1 / NCC 533).